Consider the following 559-residue polypeptide: Peptidyl-prolyl isomerase cwc27 (559 aa).

The PPIase cyclophilin-type domain occupies 11 to 184 (PTASATLHTT…YPVKVVSCEV (174 aa)). 3 disordered regions span residues 201-395 (ATAP…GFSS), 413-449 (ESAD…EDEE), and 518-559 (PRER…REKP). The span at 261–273 (APKKTSPEAEQQT) shows a compositional bias: basic and acidic residues. The span at 305–319 (LPDPESPARSPPQSP) shows a compositional bias: pro residues. Composition is skewed to polar residues over residues 384–394 (GSSTNGVTGFS) and 425–442 (TSIS…AKSN).

The protein belongs to the cyclophilin-type PPIase family. CWC27 subfamily. In terms of assembly, associated with the spliceosome.

The protein resides in the cytoplasm. Its subcellular location is the nucleus. The enzyme catalyses [protein]-peptidylproline (omega=180) = [protein]-peptidylproline (omega=0). Functionally, PPIases accelerate the folding of proteins. It catalyzes the cis-trans isomerization of proline imidic peptide bonds in oligopeptides. Involved in pre-mRNA splicing. The chain is Peptidyl-prolyl isomerase cwc27 (cwc27) from Aspergillus fumigatus (strain ATCC MYA-4609 / CBS 101355 / FGSC A1100 / Af293) (Neosartorya fumigata).